Consider the following 75-residue polypeptide: Translational regulator CsrA (75 aa).

It belongs to the CsrA/RsmA family. In terms of assembly, homodimer; the beta-strands of each monomer intercalate to form a hydrophobic core, while the alpha-helices form wings that extend away from the core.

It localises to the cytoplasm. In terms of biological role, a translational regulator that binds mRNA to regulate translation initiation and/or mRNA stability. Usually binds in the 5'-UTR at or near the Shine-Dalgarno sequence preventing ribosome-binding, thus repressing translation. Its main target seems to be the major flagellin gene, while its function is anatagonized by FliW. The sequence is that of Translational regulator CsrA from Exiguobacterium sibiricum (strain DSM 17290 / CCUG 55495 / CIP 109462 / JCM 13490 / 255-15).